The primary structure comprises 202 residues: Glycoprotein U22 (202 aa).

A signal peptide spans 1–20; that stretch reads MVPQGCSLVWVSALYVSVIA. N-linked (GlcNAc...) asparagine; by host glycosylation is found at asparagine 54, asparagine 107, asparagine 112, and asparagine 125. Residues 172–192 traverse the membrane as a helical segment; the sequence is FVYYCISVYLFAVVVLCSCWF.

The protein localises to the membrane. This Homo sapiens (Human) protein is Glycoprotein U22 (U22).